Consider the following 441-residue polypeptide: GTPase Der (441 aa).

EngA-type G domains lie at 4-169 (SIVA…PPEA) and 178-353 (PRIA…QNRN). GTP-binding positions include 10-17 (GRPNVGKS), 57-61 (DTGGI), 120-123 (NKVD), 184-191 (GKPNVGKS), 231-235 (DTAGL), and 296-299 (NKWD). A KH-like domain is found at 354 to 438 (LRISTGVLNE…SLKFFIRERK (85 aa)).

Belongs to the TRAFAC class TrmE-Era-EngA-EngB-Septin-like GTPase superfamily. EngA (Der) GTPase family. As to quaternary structure, associates with the 50S ribosomal subunit.

Functionally, GTPase that plays an essential role in the late steps of ribosome biogenesis. The sequence is that of GTPase Der from Lachnoclostridium phytofermentans (strain ATCC 700394 / DSM 18823 / ISDg) (Clostridium phytofermentans).